Reading from the N-terminus, the 136-residue chain is Piercer of microtubule wall 1 protein (136 aa).

Basic and acidic residues predominate over residues 1-16 (MSEEDPKACAEPEEPK). The disordered stretch occupies residues 1–27 (MSEEDPKACAEPEEPKAGPPPEKTSDW).

Belongs to the PIERCE1 family. As to quaternary structure, microtubule inner protein component of sperm flagellar doublet microtubules. Interacts with CFAP53, ODAD1 and ODAD3; the interactions link the outer dynein arms docking complex (ODA-DC) to the internal microtubule inner proteins (MIP) in cilium axoneme. In terms of tissue distribution, expressed in trachea multiciliated cells.

Its subcellular location is the cytoplasm. It is found in the cytoskeleton. The protein localises to the cilium axoneme. It localises to the flagellum axoneme. In terms of biological role, microtubule inner protein involved in the attachment of outer dynein arms (ODAs) to dynein-decorated doublet microtubules (DMTs) in cilia axoneme, which is required for motile cilia beating. Functions at the initial step of left-right asymmetry specification of the visceral organs. This chain is Piercer of microtubule wall 1 protein (PIERCE1), found in Bos taurus (Bovine).